Reading from the N-terminus, the 480-residue chain is Aspartyl/glutamyl-tRNA(Asn/Gln) amidotransferase subunit B (480 aa).

Belongs to the GatB/GatE family. GatB subfamily. As to quaternary structure, heterotrimer of A, B and C subunits.

It catalyses the reaction L-glutamyl-tRNA(Gln) + L-glutamine + ATP + H2O = L-glutaminyl-tRNA(Gln) + L-glutamate + ADP + phosphate + H(+). It carries out the reaction L-aspartyl-tRNA(Asn) + L-glutamine + ATP + H2O = L-asparaginyl-tRNA(Asn) + L-glutamate + ADP + phosphate + 2 H(+). Its function is as follows. Allows the formation of correctly charged Asn-tRNA(Asn) or Gln-tRNA(Gln) through the transamidation of misacylated Asp-tRNA(Asn) or Glu-tRNA(Gln) in organisms which lack either or both of asparaginyl-tRNA or glutaminyl-tRNA synthetases. The reaction takes place in the presence of glutamine and ATP through an activated phospho-Asp-tRNA(Asn) or phospho-Glu-tRNA(Gln). The chain is Aspartyl/glutamyl-tRNA(Asn/Gln) amidotransferase subunit B from Streptococcus thermophilus (strain ATCC BAA-491 / LMD-9).